The primary structure comprises 372 residues: 4-hydroxy-3-methylbut-2-en-1-yl diphosphate synthase (flavodoxin) (372 aa).

4 residues coordinate [4Fe-4S] cluster: Cys-270, Cys-273, Cys-305, and Glu-312.

This sequence belongs to the IspG family. The cofactor is [4Fe-4S] cluster.

The catalysed reaction is (2E)-4-hydroxy-3-methylbut-2-enyl diphosphate + oxidized [flavodoxin] + H2O + 2 H(+) = 2-C-methyl-D-erythritol 2,4-cyclic diphosphate + reduced [flavodoxin]. It functions in the pathway isoprenoid biosynthesis; isopentenyl diphosphate biosynthesis via DXP pathway; isopentenyl diphosphate from 1-deoxy-D-xylulose 5-phosphate: step 5/6. Converts 2C-methyl-D-erythritol 2,4-cyclodiphosphate (ME-2,4cPP) into 1-hydroxy-2-methyl-2-(E)-butenyl 4-diphosphate. The sequence is that of 4-hydroxy-3-methylbut-2-en-1-yl diphosphate synthase (flavodoxin) from Salmonella typhi.